A 739-amino-acid polypeptide reads, in one-letter code: Ent-kaurene synthase-like 3 (739 aa).

Asp475, Asp479, Asn619, Thr623, and Glu627 together coordinate Mg(2+). The short motif at 475-479 is the DDXXD motif element; that stretch reads DDFFD.

The protein belongs to the terpene synthase family. The cofactor is Mg(2+). Expressed in roots and stems.

The protein is Ent-kaurene synthase-like 3 (KSL3) of Oryza sativa subsp. japonica (Rice).